A 356-amino-acid polypeptide reads, in one-letter code: MNAARTGYRVFSANSTAACTELAKRITERLGAELGKSVVYQETNGETRVEIQESVRGQDIFIIQTIPRDVNTAVMELLIMAYALKTACARNIIGVIPYFPYSKQSKMRKRGSIVCKLLASMLAKAGLTHIITMDLHQKEIQGFFSFPVDNLRASPFLLQYIQEEIPNYRNAVIVAKSPDAAKRAQSYAERLRLGLAVIHGEAQCAEMDMDDGRHSPPMVKNATVHPGLELPLMMAKEKPPITVVGDVGGRIAIIVDDIIDDVESFVAAAEILKERGAYRIYVMATHGILSAEAPRLIEESSIDEVVVTNTVPHEVQKLQCPKIKTVDISLILSEAIRRIHNGESMAYLFRNITVDD.

M1 carries the N-acetylmethionine modification. S177 and S215 each carry phosphoserine.

This sequence belongs to the ribose-phosphate pyrophosphokinase family. Binds to PRPS1 and PRPS2.

Seems to play a negative regulatory role in 5-phosphoribose 1-diphosphate synthesis. This Bos taurus (Bovine) protein is Phosphoribosyl pyrophosphate synthase-associated protein 1 (PRPSAP1).